The following is a 95-amino-acid chain: Aspartyl/glutamyl-tRNA(Asn/Gln) amidotransferase subunit C (95 aa).

It belongs to the GatC family. As to quaternary structure, heterotrimer of A, B and C subunits.

It carries out the reaction L-glutamyl-tRNA(Gln) + L-glutamine + ATP + H2O = L-glutaminyl-tRNA(Gln) + L-glutamate + ADP + phosphate + H(+). The enzyme catalyses L-aspartyl-tRNA(Asn) + L-glutamine + ATP + H2O = L-asparaginyl-tRNA(Asn) + L-glutamate + ADP + phosphate + 2 H(+). In terms of biological role, allows the formation of correctly charged Asn-tRNA(Asn) or Gln-tRNA(Gln) through the transamidation of misacylated Asp-tRNA(Asn) or Glu-tRNA(Gln) in organisms which lack either or both of asparaginyl-tRNA or glutaminyl-tRNA synthetases. The reaction takes place in the presence of glutamine and ATP through an activated phospho-Asp-tRNA(Asn) or phospho-Glu-tRNA(Gln). The polypeptide is Aspartyl/glutamyl-tRNA(Asn/Gln) amidotransferase subunit C (Rhizobium etli (strain CIAT 652)).